Reading from the N-terminus, the 104-residue chain is ATP-dependent Clp protease adapter protein ClpS (104 aa).

It belongs to the ClpS family. As to quaternary structure, binds to the N-terminal domain of the chaperone ClpA.

Its function is as follows. Involved in the modulation of the specificity of the ClpAP-mediated ATP-dependent protein degradation. This Burkholderia mallei (strain NCTC 10247) protein is ATP-dependent Clp protease adapter protein ClpS.